The chain runs to 325 residues: Acetyl-coenzyme A carboxylase carboxyl transferase subunit alpha (325 aa).

Positions 38–292 (KLEKRLHALE…DQVLEKSLKQ (255 aa)) constitute a CoA carboxyltransferase C-terminal domain.

The protein belongs to the AccA family. Acetyl-CoA carboxylase is a heterohexamer composed of biotin carboxyl carrier protein (AccB), biotin carboxylase (AccC) and two subunits each of ACCase subunit alpha (AccA) and ACCase subunit beta (AccD).

It localises to the cytoplasm. It catalyses the reaction N(6)-carboxybiotinyl-L-lysyl-[protein] + acetyl-CoA = N(6)-biotinyl-L-lysyl-[protein] + malonyl-CoA. It functions in the pathway lipid metabolism; malonyl-CoA biosynthesis; malonyl-CoA from acetyl-CoA: step 1/1. Component of the acetyl coenzyme A carboxylase (ACC) complex. First, biotin carboxylase catalyzes the carboxylation of biotin on its carrier protein (BCCP) and then the CO(2) group is transferred by the carboxyltransferase to acetyl-CoA to form malonyl-CoA. This chain is Acetyl-coenzyme A carboxylase carboxyl transferase subunit alpha, found in Halalkalibacterium halodurans (strain ATCC BAA-125 / DSM 18197 / FERM 7344 / JCM 9153 / C-125) (Bacillus halodurans).